Reading from the N-terminus, the 295-residue chain is Glycine--tRNA ligase alpha subunit (295 aa).

The protein belongs to the class-II aminoacyl-tRNA synthetase family. In terms of assembly, tetramer of two alpha and two beta subunits.

The protein resides in the cytoplasm. The catalysed reaction is tRNA(Gly) + glycine + ATP = glycyl-tRNA(Gly) + AMP + diphosphate. This Rhodospirillum rubrum (strain ATCC 11170 / ATH 1.1.1 / DSM 467 / LMG 4362 / NCIMB 8255 / S1) protein is Glycine--tRNA ligase alpha subunit.